Consider the following 83-residue polypeptide: Small ribosomal subunit protein uS17 (83 aa).

Belongs to the universal ribosomal protein uS17 family. In terms of assembly, part of the 30S ribosomal subunit.

One of the primary rRNA binding proteins, it binds specifically to the 5'-end of 16S ribosomal RNA. This Campylobacter concisus (strain 13826) protein is Small ribosomal subunit protein uS17.